Consider the following 57-residue polypeptide: Large ribosomal subunit protein bL32 (57 aa).

The segment covering 1-19 (MATPKRRMSRANTRSRRSQ) has biased composition (basic residues). The tract at residues 1–21 (MATPKRRMSRANTRSRRSQWK) is disordered.

This sequence belongs to the bacterial ribosomal protein bL32 family.

The chain is Large ribosomal subunit protein bL32 from Mycobacterium ulcerans (strain Agy99).